Here is a 453-residue protein sequence, read N- to C-terminus: MAKKKATFICQECGYQSPKYLGRCPNCSAWSSFVEEVEVKEVKNARVSLAGEKSRPVKLKDVDNISYHRTQTDMSEFNRVLGGGVVPGSLILIGGDPGIGKSTLLLQVSTQLANKGTVLYVSGEESAEQIKLRSERLGDIDNEFYLYAETNMQAIRTEIENIKPDFLIIDSIQTIMSPDITGVQGSVSQVREVTAELMQLAKTNNIATFIVGHVTKEGTLAGPRMLEHMVDTVLYFEGERHHTFRILRAVKNRFGSTNEIGIFEMQSGGLVEVLNPSQVFLEERLDGATGSAVVVTMEGSRPILAEVQSLVTPTVFGNARRTTTGLDFNRVSLIMAVLEKRCGLLLQNQDAYLKSAGGVKLDEPAIDLAVAVAIASSYKEKPTSPQEAFLGEIGLTGEIRRVTRIEQRINEAAKLGFTKVYAPKNALQGIDIPQGIEVVGVTTVGQVLKAVFS.

The C4-type zinc-finger motif lies at 10 to 27 (CQECGYQSPKYLGRCPNC). An ATP-binding site is contributed by 95–102 (GDPGIGKS). The RadA KNRFG motif signature appears at 251 to 255 (KNRFG). The lon-protease-like stretch occupies residues 350–453 (DAYLKSAGGV…VGQVLKAVFS (104 aa)).

The protein belongs to the RecA family. RadA subfamily.

In terms of biological role, DNA-dependent ATPase involved in processing of recombination intermediates, plays a role in repairing DNA breaks. Stimulates the branch migration of RecA-mediated strand transfer reactions, allowing the 3' invading strand to extend heteroduplex DNA faster. Binds ssDNA in the presence of ADP but not other nucleotides, has ATPase activity that is stimulated by ssDNA and various branched DNA structures, but inhibited by SSB. Does not have RecA's homology-searching function. This chain is DNA repair protein RadA, found in Streptococcus pyogenes serotype M6 (strain ATCC BAA-946 / MGAS10394).